We begin with the raw amino-acid sequence, 37 residues long: Large ribosomal subunit protein bL36 (37 aa).

It belongs to the bacterial ribosomal protein bL36 family.

The sequence is that of Large ribosomal subunit protein bL36 from Alkaliphilus metalliredigens (strain QYMF).